The following is a 145-amino-acid chain: Ribosomal RNA large subunit methyltransferase H (145 aa).

S-adenosyl-L-methionine-binding positions include L68, G95, and 113–118 (FSKMTF).

This sequence belongs to the RNA methyltransferase RlmH family. As to quaternary structure, homodimer.

The protein localises to the cytoplasm. It catalyses the reaction pseudouridine(1915) in 23S rRNA + S-adenosyl-L-methionine = N(3)-methylpseudouridine(1915) in 23S rRNA + S-adenosyl-L-homocysteine + H(+). In terms of biological role, specifically methylates the pseudouridine at position 1915 (m3Psi1915) in 23S rRNA. This chain is Ribosomal RNA large subunit methyltransferase H, found in Mycoplasmopsis pulmonis (strain UAB CTIP) (Mycoplasma pulmonis).